The primary structure comprises 364 residues: Probable tartrate dehydrogenase/decarboxylase TtuC (364 aa).

Mn(2+) contacts are provided by D222, D246, and D250.

It belongs to the isocitrate and isopropylmalate dehydrogenases family. Mg(2+) serves as cofactor. The cofactor is Mn(2+). K(+) is required as a cofactor.

Its subcellular location is the cytoplasm. It carries out the reaction tartrate + NAD(+) = 2-hydroxy-3-oxosuccinate + NADH + H(+). The enzyme catalyses (2R,3S)-tartrate + NAD(+) = 2-hydroxy-3-oxosuccinate + NADH + H(+). It catalyses the reaction (2R,3R)-tartrate + NAD(+) = 2-hydroxy-3-oxosuccinate + NADH + H(+). The catalysed reaction is (2R,3R)-tartrate + H(+) = (R)-glycerate + CO2. It carries out the reaction (R)-malate + NAD(+) = pyruvate + CO2 + NADH. It functions in the pathway carbohydrate acid metabolism; tartrate degradation; 2-hydroxy-3-oxosuccinate from L-tartrate: step 1/1. Its pathway is carbohydrate acid metabolism; tartrate degradation; 2-hydroxy-3-oxosuccinate from meso-tartrate: step 1/1. It participates in carbohydrate acid metabolism; tartrate degradation; D-glycerate from L-tartrate: step 1/1. Has multiple catalytic activities. Apart from catalyzing the oxidation of (+)-tartrate to oxaloglycolate, also converts meso-tartrate to D-glycerate and catalyzes the oxidative decarboxylation of D-malate to pyruvate. This chain is Probable tartrate dehydrogenase/decarboxylase TtuC (ttuC), found in Agrobacterium vitis (Rhizobium vitis).